A 268-amino-acid polypeptide reads, in one-letter code: Tetraspanin-33 (268 aa).

Residues 1 to 23 are Cytoplasmic-facing; it reads MVRKSPGSGKEEDFTFISPVVKY. Residues 24-44 form a helical membrane-spanning segment; the sequence is LLIFFNMLFWVISMVMVGIGV. Over 45-63 the chain is Extracellular; that stretch reads YARLLKHAEAAMACLAVDP. A helical membrane pass occupies residues 64-84; that stretch reads ALLLIGVGILMFLITFCGCIG. At 85–95 the chain is on the cytoplasmic side; that stretch reads SLRENICLLQT. A helical transmembrane segment spans residues 96 to 116; that stretch reads FSICLTLVFLLQLAVGIVGFI. The Extracellular segment spans residues 117 to 226; the sequence is FSDKARGKVS…FIHTNGCIDR (110 aa). 4 disulfides stabilise this stretch: Cys-155–Cys-223, Cys-156–Cys-188, Cys-172–Cys-182, and Cys-189–Cys-202. 2 N-linked (GlcNAc...) asparagine glycosylation sites follow: Asn-171 and Asn-176. Residues 227–247 form a helical membrane-spanning segment; sequence LVNWIHSNLFLLGGVALGLAI. Residues 248–268 lie on the Cytoplasmic side of the membrane; that stretch reads PQVTKHLRAKLIYTWRIGIQV.

Belongs to the tetraspanin (TM4SF) family. As to quaternary structure, homodimer; disulfide-linked.

It is found in the cell membrane. The protein localises to the cell junction. It localises to the adherens junction. The protein resides in the cytoplasm. In terms of biological role, part of TspanC8 subgroup, composed of 6 members that interact with the transmembrane metalloprotease ADAM10. This interaction is required for ADAM10 exit from the endoplasmic reticulum and for enzymatic maturation and trafficking to the cell surface as well as substrate specificity. Different TspanC8/ADAM10 complexes have distinct substrates. The polypeptide is Tetraspanin-33 (tspan33) (Xenopus laevis (African clawed frog)).